A 211-amino-acid chain; its full sequence is tRNA (guanine-N(7)-)-methyltransferase (211 aa).

4 residues coordinate S-adenosyl-L-methionine: E44, D69, D96, and D118. D118 is a catalytic residue. K122 contributes to the substrate binding site. The interaction with RNA stretch occupies residues 124 to 129 (RHEKRR). Substrate-binding positions include D154 and 191-194 (TEYE).

The protein belongs to the class I-like SAM-binding methyltransferase superfamily. TrmB family.

The enzyme catalyses guanosine(46) in tRNA + S-adenosyl-L-methionine = N(7)-methylguanosine(46) in tRNA + S-adenosyl-L-homocysteine. It functions in the pathway tRNA modification; N(7)-methylguanine-tRNA biosynthesis. In terms of biological role, catalyzes the formation of N(7)-methylguanine at position 46 (m7G46) in tRNA. The polypeptide is tRNA (guanine-N(7)-)-methyltransferase (Streptococcus mutans serotype c (strain ATCC 700610 / UA159)).